Here is a 327-residue protein sequence, read N- to C-terminus: Putative HTH-type transcriptional regulatory protein Mevan_1514 (327 aa).

The region spanning L128–F189 is the HTH cro/C1-type domain. The segment at residues V139–Q158 is a DNA-binding region (H-T-H motif).

The protein is Putative HTH-type transcriptional regulatory protein Mevan_1514 of Methanococcus vannielii (strain ATCC 35089 / DSM 1224 / JCM 13029 / OCM 148 / SB).